The sequence spans 346 residues: MTMNNPNLTMIARNWRDLIRPKGISIDAESGTQFYAKFTCEPLERGFGITIGNSLRRVLLSSLQGAAATAIRIEGALHEFTTVPDVVEDVSDIILNVKEVVFKAATPKTYSVRIDREGPGPVYARDIQLVEGLSVLNPDHLIAVLDKKGPLSMELTVNVGRGYVPAERNKTPTMPIGTIPIDALFSPIRKVNYTVQNARVGQVTDYDKLTLEVWTNGSVSPADAVAFAAKILKEQLSIWVNFEESEETSYQAVMSDDEPLNENLFRSVEELELSVRSANCLQNANITLIGELVQRTEQDMLKTKNFGRKSLKEIKEILANMGLSLGMKIDNWPQLLERWKAQQAQA.

The tract at residues M1 to E243 is alpha N-terminal domain (alpha-NTD). The alpha C-terminal domain (alpha-CTD) stretch occupies residues L260–A346.

Belongs to the RNA polymerase alpha chain family. In terms of assembly, homodimer. The RNAP catalytic core consists of 2 alpha, 1 beta, 1 beta' and 1 omega subunit. When a sigma factor is associated with the core the holoenzyme is formed, which can initiate transcription.

The enzyme catalyses RNA(n) + a ribonucleoside 5'-triphosphate = RNA(n+1) + diphosphate. In terms of biological role, DNA-dependent RNA polymerase catalyzes the transcription of DNA into RNA using the four ribonucleoside triphosphates as substrates. The protein is DNA-directed RNA polymerase subunit alpha of Sorangium cellulosum (strain So ce56) (Polyangium cellulosum (strain So ce56)).